Consider the following 434-residue polypeptide: Serine/threonine transporter SstT (434 aa).

A run of 9 helical transmembrane segments spans residues 14 to 34, 41 to 61, 72 to 92, 135 to 155, 172 to 192, 210 to 230, 282 to 302, 316 to 336, and 351 to 371; these read IVIG…WSFI, FVGA…MSAI, FGTV…AAVA, ALVE…GSGL, TVSA…VGLL, LLML…PFMV, ISIP…VSIM, IFLA…VSGI, and FGIS…IGVV. The interval 413 to 434 is disordered; that stretch reads GKGTAEVVTPEKTNEAEESEQV.

This sequence belongs to the dicarboxylate/amino acid:cation symporter (DAACS) (TC 2.A.23) family.

It is found in the cell membrane. It catalyses the reaction L-serine(in) + Na(+)(in) = L-serine(out) + Na(+)(out). It carries out the reaction L-threonine(in) + Na(+)(in) = L-threonine(out) + Na(+)(out). Its function is as follows. Involved in the import of serine and threonine into the cell, with the concomitant import of sodium (symport system). In Lacticaseibacillus casei (strain BL23) (Lactobacillus casei), this protein is Serine/threonine transporter SstT.